The following is a 161-amino-acid chain: Vasotocin-neurophysin VT (161 aa).

A signal peptide spans 1–19 (MAEPSLPLSFLCLLALSSA). A disulfide bond links Cys20 and Cys25. Gly28 bears the Glycine amide mark. 7 disulfide bridges follow: Cys41–Cys85, Cys44–Cys58, Cys52–Cys75, Cys59–Cys65, Cys92–Cys104, Cys98–Cys116, and Cys105–Cys110.

This sequence belongs to the vasopressin/oxytocin family. Post-translationally, seven disulfide bonds are present in neurophysin.

It localises to the secreted. Vasotocin is an antidiuretic hormone. In Gallus gallus (Chicken), this protein is Vasotocin-neurophysin VT.